The sequence spans 316 residues: tRNA dimethylallyltransferase (316 aa).

Residue 17 to 24 (GPTASGKT) participates in ATP binding. 19 to 24 (TASGKT) is a substrate binding site. 4 interaction with substrate tRNA regions span residues 42-45 (DSAL), 166-170 (QRLSR), 247-252 (RCVGYR), and 280-287 (KRQITWLR).

It belongs to the IPP transferase family. In terms of assembly, monomer. It depends on Mg(2+) as a cofactor.

The enzyme catalyses adenosine(37) in tRNA + dimethylallyl diphosphate = N(6)-dimethylallyladenosine(37) in tRNA + diphosphate. Its function is as follows. Catalyzes the transfer of a dimethylallyl group onto the adenine at position 37 in tRNAs that read codons beginning with uridine, leading to the formation of N6-(dimethylallyl)adenosine (i(6)A). This chain is tRNA dimethylallyltransferase, found in Escherichia coli O127:H6 (strain E2348/69 / EPEC).